The following is a 466-amino-acid chain: 3-isopropylmalate dehydratase large subunit (466 aa).

[4Fe-4S] cluster is bound by residues cysteine 347, cysteine 407, and cysteine 410.

The protein belongs to the aconitase/IPM isomerase family. LeuC type 1 subfamily. In terms of assembly, heterodimer of LeuC and LeuD. The cofactor is [4Fe-4S] cluster.

It catalyses the reaction (2R,3S)-3-isopropylmalate = (2S)-2-isopropylmalate. It participates in amino-acid biosynthesis; L-leucine biosynthesis; L-leucine from 3-methyl-2-oxobutanoate: step 2/4. Its function is as follows. Catalyzes the isomerization between 2-isopropylmalate and 3-isopropylmalate, via the formation of 2-isopropylmaleate. The sequence is that of 3-isopropylmalate dehydratase large subunit from Shigella dysenteriae serotype 1 (strain Sd197).